We begin with the raw amino-acid sequence, 419 residues long: S-adenosylmethionine synthase (419 aa).

Residue His-15 participates in ATP binding. Asp-17 is a Mg(2+) binding site. Position 43 (Glu-43) interacts with K(+). Positions 56 and 100 each coordinate L-methionine. Residues 100 to 110 are flexible loop; that stretch reads QSPDIAQGVDE. ATP is bound by residues 171-173, 248-249, Asp-257, 263-264, Ala-280, and Lys-284; these read DGK, KF, and RK. Asp-257 contacts L-methionine. Lys-288 is a binding site for L-methionine.

The protein belongs to the AdoMet synthase family. In terms of assembly, homotetramer; dimer of dimers. Requires Mg(2+) as cofactor. K(+) is required as a cofactor.

The protein resides in the cytoplasm. The catalysed reaction is L-methionine + ATP + H2O = S-adenosyl-L-methionine + phosphate + diphosphate. The protein operates within amino-acid biosynthesis; S-adenosyl-L-methionine biosynthesis; S-adenosyl-L-methionine from L-methionine: step 1/1. Catalyzes the formation of S-adenosylmethionine (AdoMet) from methionine and ATP. The overall synthetic reaction is composed of two sequential steps, AdoMet formation and the subsequent tripolyphosphate hydrolysis which occurs prior to release of AdoMet from the enzyme. This Synechococcus sp. (strain CC9311) protein is S-adenosylmethionine synthase.